The sequence spans 115 residues: Splicing factor 3B subunit 6-like protein (115 aa).

The interaction with pre-mRNA branch site stretch occupies residues 9-22; that stretch reads EVNSILFIKNLSFK. The RRM domain occupies 12–87; that stretch reads SILFIKNLSF…RYLVVHYYNP (76 aa).

It is found in the nucleus. In terms of biological role, necessary for the splicing of pre-mRNA. This Schizosaccharomyces pombe (strain 972 / ATCC 24843) (Fission yeast) protein is Splicing factor 3B subunit 6-like protein.